The following is a 595-amino-acid chain: Chaperone protein HscA homolog (595 aa).

This sequence belongs to the heat shock protein 70 family.

Chaperone involved in the maturation of iron-sulfur cluster-containing proteins. Has a low intrinsic ATPase activity which is markedly stimulated by HscB. The protein is Chaperone protein HscA homolog of Rickettsia conorii (strain ATCC VR-613 / Malish 7).